Reading from the N-terminus, the 181-residue chain is Ribosome maturation factor RimP (181 aa).

The protein belongs to the RimP family.

The protein resides in the cytoplasm. Functionally, required for maturation of 30S ribosomal subunits. This chain is Ribosome maturation factor RimP, found in Sphingopyxis alaskensis (strain DSM 13593 / LMG 18877 / RB2256) (Sphingomonas alaskensis).